We begin with the raw amino-acid sequence, 298 residues long: N-acetylmuramic acid 6-phosphate etherase (298 aa).

The SIS domain occupies 55–218; it reads IHAQVSGGGR…STGLMIKSGK (164 aa). The active-site Proton donor is glutamate 83. Glutamate 114 is an active-site residue.

It belongs to the GCKR-like family. MurNAc-6-P etherase subfamily. Homodimer.

It catalyses the reaction N-acetyl-D-muramate 6-phosphate + H2O = N-acetyl-D-glucosamine 6-phosphate + (R)-lactate. It participates in amino-sugar metabolism; 1,6-anhydro-N-acetylmuramate degradation. The protein operates within amino-sugar metabolism; N-acetylmuramate degradation. Its pathway is cell wall biogenesis; peptidoglycan recycling. In terms of biological role, specifically catalyzes the cleavage of the D-lactyl ether substituent of MurNAc 6-phosphate, producing GlcNAc 6-phosphate and D-lactate. Together with AnmK, is also required for the utilization of anhydro-N-acetylmuramic acid (anhMurNAc) either imported from the medium or derived from its own cell wall murein, and thus plays a role in cell wall recycling. In Escherichia coli O8 (strain IAI1), this protein is N-acetylmuramic acid 6-phosphate etherase.